A 177-amino-acid chain; its full sequence is Insertion element IS1223 uncharacterized 20.7 kDa protein (177 aa).

The segment at 112–131 (KQKGRPRKVPKKSKKTTKKL) is disordered. The span at 113–128 (QKGRPRKVPKKSKKTT) shows a compositional bias: basic residues.

This sequence belongs to the IS150/IS1296 orfA family.

This chain is Insertion element IS1223 uncharacterized 20.7 kDa protein, found in Lactobacillus johnsonii.